A 232-amino-acid polypeptide reads, in one-letter code: NAD(P)H-hydrate epimerase (232 aa).

A YjeF N-terminal domain is found at 9-219 (AISVDEELFN…KLQDKYAMEL (211 aa)). Position 62-66 (62-66 (NNGGD)) interacts with (6S)-NADPHX. 2 residues coordinate K(+): Asn63 and Asp127. (6S)-NADPHX-binding positions include 131–137 (GFSFKPP) and Asp160. Ser163 is a binding site for K(+).

This sequence belongs to the NnrE/AIBP family. The cofactor is K(+).

It catalyses the reaction (6R)-NADHX = (6S)-NADHX. The catalysed reaction is (6R)-NADPHX = (6S)-NADPHX. Catalyzes the epimerization of the S- and R-forms of NAD(P)HX, a damaged form of NAD(P)H that is a result of enzymatic or heat-dependent hydration. This is a prerequisite for the S-specific NAD(P)H-hydrate dehydratase to allow the repair of both epimers of NAD(P)HX. The polypeptide is NAD(P)H-hydrate epimerase (Aedes aegypti (Yellowfever mosquito)).